A 290-amino-acid polypeptide reads, in one-letter code: Metallo-beta-lactamase L1 type 3 (290 aa).

An N-terminal signal peptide occupies residues 1–21; it reads MRSTLLAFALAVALPAAHTSA. Positions 22–33 are excised as a propeptide; that stretch reads AEVPLPQLRAYT. Residues His105, His107, Asp109, His110, and His181 each coordinate Zn(2+). Asp205 lines the substrate pocket. Cys239 and Cys267 are oxidised to a cystine. His246 contacts Zn(2+).

It belongs to the metallo-beta-lactamase superfamily. Class-B beta-lactamase family. As to quaternary structure, homotetramer. Zn(2+) is required as a cofactor.

Its subcellular location is the periplasm. It carries out the reaction a beta-lactam + H2O = a substituted beta-amino acid. Inhibited by Hg(2+) or Cu(2+), and by chelating agents such as EDTA and O-phenanthroline. Reduced enzymatic activity in presence of cobalt, nickel, cadmium, and manganese. Its function is as follows. Confers resistance to the different beta-lactams antibiotics (penicillin, cephalosporin and carbapenem) via the hydrolysis of the beta-lactam ring. This is Metallo-beta-lactamase L1 type 3 from Stenotrophomonas maltophilia (Pseudomonas maltophilia).